The sequence spans 1178 residues: DNA-directed RNA polymerase subunit beta (1178 aa).

The disordered stretch occupies residues 1–37 (MLEGCILADSRQSKTAASPSPSRPQSSSNNSVPGAPN). Residues 18–33 (SPSPSRPQSSSNNSVP) show a composition bias toward low complexity.

This sequence belongs to the RNA polymerase beta chain family. As to quaternary structure, the RNAP catalytic core consists of 2 alpha, 1 beta, 1 beta' and 1 omega subunit. When a sigma factor is associated with the core the holoenzyme is formed, which can initiate transcription.

The catalysed reaction is RNA(n) + a ribonucleoside 5'-triphosphate = RNA(n+1) + diphosphate. In terms of biological role, DNA-dependent RNA polymerase catalyzes the transcription of DNA into RNA using the four ribonucleoside triphosphates as substrates. The polypeptide is DNA-directed RNA polymerase subunit beta (Mycobacterium tuberculosis (strain CDC 1551 / Oshkosh)).